A 569-amino-acid polypeptide reads, in one-letter code: Glucose-6-phosphate isomerase, cytosolic 2 (569 aa).

Catalysis depends on E360, which acts as the Proton donor. Active-site residues include H391 and K516.

The protein belongs to the GPI family. Homodimer.

Its subcellular location is the cytoplasm. The enzyme catalyses alpha-D-glucose 6-phosphate = beta-D-fructose 6-phosphate. It functions in the pathway carbohydrate degradation; glycolysis; D-glyceraldehyde 3-phosphate and glycerone phosphate from D-glucose: step 2/4. This is Glucose-6-phosphate isomerase, cytosolic 2 (PGIC2) from Clarkia concinna (Red ribbons).